The following is a 137-amino-acid chain: Nucleoside diphosphate kinase (137 aa).

6 residues coordinate ATP: Lys-10, Phe-58, Arg-86, Thr-92, Arg-103, and Asn-113. His-116 serves as the catalytic Pros-phosphohistidine intermediate.

It belongs to the NDK family. As to quaternary structure, homotetramer. Mg(2+) serves as cofactor.

The protein resides in the cytoplasm. It catalyses the reaction a 2'-deoxyribonucleoside 5'-diphosphate + ATP = a 2'-deoxyribonucleoside 5'-triphosphate + ADP. It carries out the reaction a ribonucleoside 5'-diphosphate + ATP = a ribonucleoside 5'-triphosphate + ADP. Its function is as follows. Major role in the synthesis of nucleoside triphosphates other than ATP. The ATP gamma phosphate is transferred to the NDP beta phosphate via a ping-pong mechanism, using a phosphorylated active-site intermediate. This Helicobacter pylori (strain G27) protein is Nucleoside diphosphate kinase.